A 709-amino-acid chain; its full sequence is Glycerol kinase (709 aa).

Thr56 contributes to the substrate binding site. Arg60 provides a ligand contact to ATP. The tract at residues 86-110 is disordered; that stretch reads KIGVSGLRRPSTAPARETPNAGDIK. Arg201, Tyr258, and Asp386 together coordinate substrate. ATP contacts are provided by residues Thr408, Gly463, and 584-588; that span reads GMSRS.

It belongs to the FGGY kinase family.

It catalyses the reaction glycerol + ATP = sn-glycerol 3-phosphate + ADP + H(+). Its pathway is polyol metabolism; glycerol degradation via glycerol kinase pathway; sn-glycerol 3-phosphate from glycerol: step 1/1. Functionally, key enzyme in the regulation of glycerol uptake and metabolism. Catalyzes the phosphorylation of glycerol to yield sn-glycerol 3-phosphate. This Saccharomyces cerevisiae (strain ATCC 204508 / S288c) (Baker's yeast) protein is Glycerol kinase (GUT1).